We begin with the raw amino-acid sequence, 204 residues long: MDASSIPQINIEDFDGLEVAPDDHLRNLKALTEKLRLETRRPSYLEWKERVEAQNTKGLAVSDGSTELEKDAGLKPRATPQRTIEDSQMTAGNGLISRSLGGFDNIDEALVWLRKELMEMRIQDQQLARQLMRLRGDINKLKVEQTCHLHRRMLNDATFGLEERDELSDLLCDGPVTPGFGLSSPLRLIGVTKMNINSRRFSLC.

Residues 58–80 (GLAVSDGSTELEKDAGLKPRATP) are disordered. The stretch at 113–146 (LRKELMEMRIQDQQLARQLMRLRGDINKLKVEQT) forms a coiled coil.

Belongs to the FAM167 (SEC) family.

The sequence is that of Protein FAM167A (fam167a) from Danio rerio (Zebrafish).